The following is a 78-amino-acid chain: Conotoxin ArMKLT2-0313 (78 aa).

A signal peptide spans 1–22 (MKLTCVLIIAVLCLTVCQLITA). The propeptide occupies 23-47 (DYLRDKQKYRSVRLRDGMLNFKGSR). Glutamine 48 carries the post-translational modification Pyrrolidone carboxylic acid. 3 disulfide bridges follow: cysteine 49–cysteine 62, cysteine 56–cysteine 67, and cysteine 61–cysteine 75.

This sequence belongs to the conotoxin O1 superfamily. As to expression, expressed by the venom duct.

It is found in the secreted. This Conus arenatus (Sand-dusted cone) protein is Conotoxin ArMKLT2-0313.